The sequence spans 177 residues: MIISENNRREICKYLFKEGVCFAKKDFNLPKHPLIDVPNLQVIKLMQSFKSKEYVRETFAWMHYYWFLTNEGIEFLRTYLNLPSDVVPATLKKSAKPGGRPFGGPPGDRQRGPPRSDGDRPRFGDRDGYRGGPRGGDEKGGAPADFQPSFQGGGGRPGFGRGAGGYSAAAPSGSGFP.

Residues 90 to 177 (TLKKSAKPGG…AAAPSGSGFP (88 aa)) are disordered. The span at 108–140 (DRQRGPPRSDGDRPRFGDRDGYRGGPRGGDEKG) shows a compositional bias: basic and acidic residues. Low complexity predominate over residues 141–150 (GAPADFQPSF). Over residues 151–165 (QGGGGRPGFGRGAGG) the composition is skewed to gly residues. The span at 166–177 (YSAAAPSGSGFP) shows a compositional bias: low complexity.

This sequence belongs to the eukaryotic ribosomal protein eS10 family.

It localises to the cytoplasm. The polypeptide is Small ribosomal subunit protein eS10z (RPS10A) (Arabidopsis thaliana (Mouse-ear cress)).